A 259-amino-acid chain; its full sequence is tRNA (guanine-N(1)-)-methyltransferase (259 aa).

S-adenosyl-L-methionine-binding positions include Gly113 and 133-138 (IGDYVL).

The protein belongs to the RNA methyltransferase TrmD family. As to quaternary structure, homodimer.

It localises to the cytoplasm. The catalysed reaction is guanosine(37) in tRNA + S-adenosyl-L-methionine = N(1)-methylguanosine(37) in tRNA + S-adenosyl-L-homocysteine + H(+). Functionally, specifically methylates guanosine-37 in various tRNAs. The chain is tRNA (guanine-N(1)-)-methyltransferase from Xanthomonas oryzae pv. oryzae (strain MAFF 311018).